An 83-amino-acid chain; its full sequence is Small ribosomal subunit protein bS20 (83 aa).

This sequence belongs to the bacterial ribosomal protein bS20 family.

Functionally, binds directly to 16S ribosomal RNA. In Staphylococcus haemolyticus (strain JCSC1435), this protein is Small ribosomal subunit protein bS20.